We begin with the raw amino-acid sequence, 296 residues long: GTPase Era (296 aa).

The 167-residue stretch at 7 to 173 folds into the Era-type G domain; the sequence is KAGFVSIIGR…VDLVREHLPE (167 aa). A G1 region spans residues 15–22; it reads GRPNVGKS. 15-22 contributes to the GTP binding site; it reads GRPNVGKS. The interval 41–45 is G2; sequence QTTRN. A G3 region spans residues 62–65; the sequence is DTPG. GTP contacts are provided by residues 62-66 and 122-125; these read DTPGI and NKID. Positions 122-125 are G4; it reads NKID. The G5 stretch occupies residues 152–154; sequence ISA. Positions 204-281 constitute a KH type-2 domain; the sequence is TNREVPYGTA…YLELFVQVQE (78 aa).

Belongs to the TRAFAC class TrmE-Era-EngA-EngB-Septin-like GTPase superfamily. Era GTPase family. As to quaternary structure, monomer.

The protein resides in the cytoplasm. The protein localises to the cell inner membrane. Functionally, an essential GTPase that binds both GDP and GTP, with rapid nucleotide exchange. Plays a role in 16S rRNA processing and 30S ribosomal subunit biogenesis and possibly also in cell cycle regulation and energy metabolism. The polypeptide is GTPase Era (Trichlorobacter lovleyi (strain ATCC BAA-1151 / DSM 17278 / SZ) (Geobacter lovleyi)).